We begin with the raw amino-acid sequence, 382 residues long: MKTELSLLDRSLNLQRYPKRAQELLQAWDAGDEYIIKYVEEELNLEDGKNILILNDNFGALSCWFSDKHNVTMMTDSFVSQRGTLKNLQRNQCNRVQLITSTEEMPQGFDLVLMQIPKNNRMLTWQLQQLRQSMDSSCPIIAVNKAKEIHSSTLELFEDYLGETKTSLAWKKHRLVFSNANVSNPKTIAEAVCWSVDNEDIDLLNYPNVYSGEKLDQGARFMLDHIPSDPELRHIIDLGCGNGVLSVKAGQLNPEARITCVDESFMAVESAHRNLEVNLGKERQFQFIANNCLDGFKKHSSYLVLCNPPFHQGQAITDHIAWQMFCDAKHILCKDGKLLVIGNRHLDYDGKLCRLFGEENVTTVASNSKFVILEAVKAEKSK.

It belongs to the methyltransferase superfamily. RlmG family.

It localises to the cytoplasm. The enzyme catalyses guanosine(1835) in 23S rRNA + S-adenosyl-L-methionine = N(2)-methylguanosine(1835) in 23S rRNA + S-adenosyl-L-homocysteine + H(+). Functionally, specifically methylates the guanine in position 1835 (m2G1835) of 23S rRNA. This chain is Ribosomal RNA large subunit methyltransferase G, found in Aliivibrio fischeri (strain ATCC 700601 / ES114) (Vibrio fischeri).